The chain runs to 239 residues: Endonuclease V (239 aa).

Mg(2+)-binding residues include D48 and D116.

It belongs to the endonuclease V family. Requires Mg(2+) as cofactor.

Its subcellular location is the cytoplasm. The catalysed reaction is Endonucleolytic cleavage at apurinic or apyrimidinic sites to products with a 5'-phosphate.. Functionally, DNA repair enzyme involved in the repair of deaminated bases. Selectively cleaves double-stranded DNA at the second phosphodiester bond 3' to a deoxyinosine leaving behind the intact lesion on the nicked DNA. The protein is Endonuclease V of Xanthomonas oryzae pv. oryzae (strain MAFF 311018).